Here is a 1493-residue protein sequence, read N- to C-terminus: MKQSYAMDNPIVFFLLESNYFPMFSIFFNLLLLLVMFGSCVYKKRLGWENSDAFTNERFKDMSLTYNKLVVICCETLSALNSVLLLLSCFNLHKNGWDRSELMILLDLLFTALSWGAISFYIRSQFTYSHDQKFPILLRVWWVLYFMFSCYRLLVDIALYKKQELVSVHLLLSDVLAVSVGLFLCYSCLQKQGQGERINLLLEEPLLNGAESSAATSVQLDKAEDDEVVTPFSNAGFLSHVSFSWMSPLIVLGNEKIIDSEDVPQVDNSDRAEKLFWIFRSKLEWDDGERRITTYKLIKALFFSVWRDILLSTLFAFVYTVSCYVAPYLMDTFVQYLNGQRQYSNQGVVLVTTFFVAKLVECQARRNWYFRLQKAGIGMRSVLVSMIYEKGLTLPCYSKQGHTSGEIINLMTVDAERISAFSWYMHDPWILVLQISLALLILYRSLGLGSIAAFAATFLVMLGNIPLAKLEEKFQGNLMESKDNRMKKTSEALLNMRILKLQGWEMKFLHKILDLRGIEAGWLKKFVYNSAAISSVLWAAPSFVSATAFGACMLLKIPLESGKIIAALATFRILQTPIYKLPDTISMIVQTKVSLDRIATFLCLDDLQQDGMERLPSGSSKMDVEVSNGAFSWDDSSPIPTLKDIRFKIPHGMNIAICGTVGSGKSSLLSSILGEVPKISGNLKVCGRKAYIAQSPWIQSGKVEENILFGKPMQREWYQRVLEACSLNKDLEVFPFRDQTVIGERGINLSGGQKQRIQIARALYQDADIYLFDDPFSAVDAHTGSHLFKEVLLGLLRNKTVIYVTHQLEFLPEADLILVMKDGRITQAGKYNEILESGTDFMELVGAHTDALAAVDSYEKGSASAQSTTSKESKVSNDEEKQEEDLPSPKGQLVQEEEREKGKVGFTVYQKYMKLAYGGALVPIILVVQILFQVLNIGSNYWMAWVTPVSKDVKPLVSGSTLILVYVFLATASSFCILVRAMLSAMTGFKIATELFNQMHFRIFRASMSFFDATPIGRILNRASTDQSAVDLRLPSQFSNLAIAAVNILGIIGVMGQVAWQVLIVFIPVIAACTWYRQYYISAARELARLSGISRSPLVQHFSETLSGITTIRSFDQEPRFRTDIMRLNDCYSRLRFHAISAMEWLCFRLDLLSTVAFALSLVILVSVPEGVINPSFAGLAVTYALNLNSLQATLIWTLCDLENKMISVERMLQYIDIPSEPSLVIESTRPEKSWPCRGEITICNLQVRYGPHLPMVLRGLTCTFRGGLKTGIVGRTGCGKSTLIQTLFRIVEPAAGEIRIDGINILTIGLHDLRSRLSIIPQEPTMFEGTVRSNLDPLEEYADDQIWEALDKCQLGDEIRKKELKLDSPVSENGQNWSVGQRQLVCLGRVLLKRSKVLILDEATASVDTATDTLIQETLRQHFSGCTVITIAHRISSVIDSDMVLLLDQGLIEEHDSPARLLEDKSSSFSKLVAEYTASSDSRFKRSSMKTN.

10 helical membrane-spanning segments follow: residues 21 to 41 (FPMFSIFFNLLLLLVMFGSCV), 70 to 90 (VVICCETLSALNSVLLLLSCF), 102 to 122 (LMILLDLLFTALSWGAISFYI), 140 to 160 (VWWVLYFMFSCYRLLVDIALY), 165 to 185 (LVSVHLLLSDVLAVSVGLFLC), 309 to 329 (ILLSTLFAFVYTVSCYVAPYL), 343 to 360 (YSNQGVVLVTTFFVAKLV), 423 to 443 (WYMHDPWILVLQISLALLILY), 448 to 468 (LGSIAAFAATFLVMLGNIPLA), and 535 to 555 (SVLWAAPSFVSATAFGACMLL). Residues 309-590 (ILLSTLFAFV…LPDTISMIVQ (282 aa)) form the ABC transmembrane type-1 1 domain. Residues 624–847 (VEVSNGAFSW…GTDFMELVGA (224 aa)) enclose the ABC transporter 1 domain. 659 to 666 (GTVGSGKS) contributes to the ATP binding site. The segment at 863-898 (ASAQSTTSKESKVSNDEEKQEEDLPSPKGQLVQEEE) is disordered. Serine 888 bears the Phosphoserine mark. 6 helical membrane passes run 915–935 (LAYGGALVPIILVVQILFQVL), 959–979 (GSTLILVYVFLATASSFCILV), 1038–1055 (FSNLAIAAVNILGIIGVM), 1059–1081 (AWQVLIVFIPVIAACTWYRQYYI), 1153–1173 (LSTVAFALSLVILVSVPEGVI), and 1177–1197 (FAGLAVTYALNLNSLQATLIW). Residues 922–1204 (VPIILVVQIL…LIWTLCDLEN (283 aa)) form the ABC transmembrane type-1 2 domain. In terms of domain architecture, ABC transporter 2 spans 1241-1475 (ITICNLQVRY…KSSSFSKLVA (235 aa)). 1275 to 1282 (GRTGCGKS) contributes to the ATP binding site.

It belongs to the ABC transporter superfamily. ABCC family. Conjugate transporter (TC 3.A.1.208) subfamily. As to expression, ubiquitous.

The protein localises to the membrane. It catalyses the reaction ATP + H2O + xenobioticSide 1 = ADP + phosphate + xenobioticSide 2.. Its function is as follows. Pump for glutathione S-conjugates. The chain is ABC transporter C family member 7 (ABCC7) from Arabidopsis thaliana (Mouse-ear cress).